The chain runs to 103 residues: Large ribosomal subunit protein bL21 (103 aa).

Belongs to the bacterial ribosomal protein bL21 family. In terms of assembly, part of the 50S ribosomal subunit. Contacts protein L20.

In terms of biological role, this protein binds to 23S rRNA in the presence of protein L20. This chain is Large ribosomal subunit protein bL21, found in Mycobacterium marinum (strain ATCC BAA-535 / M).